The following is a 122-amino-acid chain: Vitelline membrane protein Vm32E (122 aa).

The signal sequence occupies residues 1–19 (MKTVAFLAVVVLFAAFACA). Residues 40-79 (SVPAPPCPKNYLFSCQPNLVPAPCAQQAAPAAYGSAGAYT) form the VM domain.

The protein belongs to the vitelline membrane family.

Its subcellular location is the secreted. Functionally, major early eggshell protein. The chain is Vitelline membrane protein Vm32E from Drosophila persimilis (Fruit fly).